Reading from the N-terminus, the 190-residue chain is Putative manganese efflux pump MntP (190 aa).

A run of 5 helical transmembrane segments spans residues 37-57, 64-84, 111-131, 135-155, and 164-184; these read LILA…GWGI, LSFI…GVGA, LILG…MAFV, IITL…VGAW, and FGGW…GNIL.

This sequence belongs to the MntP (TC 9.B.29) family.

The protein localises to the cell membrane. Probably functions as a manganese efflux pump. The sequence is that of Putative manganese efflux pump MntP from Corynebacterium efficiens (strain DSM 44549 / YS-314 / AJ 12310 / JCM 11189 / NBRC 100395).